The primary structure comprises 165 residues: MKVIQGDYRGEGLKIAVVVPRFNDLVTSKLLEGALDGLKRHGVSDENITVVRIPGSMEAIYTLKKLLDLNVHDAIIVLGAVIRGETYHFNVVANEIGKAVAQFNMTSDIPIVFGVLTTDTLEQALNRAGAKSGNKGFEAAMVAIEMANLRKRLRRDVFESDSNGR.

5-amino-6-(D-ribitylamino)uracil-binding positions include Phe-22, Ser-56–Glu-58, and Ala-80–Ile-82. (2S)-2-hydroxy-3-oxobutyl phosphate is bound at residue Glu-85–Thr-86. His-88 functions as the Proton donor in the catalytic mechanism. Phe-113 provides a ligand contact to 5-amino-6-(D-ribitylamino)uracil. Residue Arg-127 coordinates (2S)-2-hydroxy-3-oxobutyl phosphate.

This sequence belongs to the DMRL synthase family.

It carries out the reaction (2S)-2-hydroxy-3-oxobutyl phosphate + 5-amino-6-(D-ribitylamino)uracil = 6,7-dimethyl-8-(1-D-ribityl)lumazine + phosphate + 2 H2O + H(+). It participates in cofactor biosynthesis; riboflavin biosynthesis; riboflavin from 2-hydroxy-3-oxobutyl phosphate and 5-amino-6-(D-ribitylamino)uracil: step 1/2. Its function is as follows. Catalyzes the formation of 6,7-dimethyl-8-ribityllumazine by condensation of 5-amino-6-(D-ribitylamino)uracil with 3,4-dihydroxy-2-butanone 4-phosphate. This is the penultimate step in the biosynthesis of riboflavin. The sequence is that of 6,7-dimethyl-8-ribityllumazine synthase from Thermotoga petrophila (strain ATCC BAA-488 / DSM 13995 / JCM 10881 / RKU-1).